A 742-amino-acid chain; its full sequence is Synaptic vesicle glycoprotein 2A (742 aa).

The interval 1 to 57 (MEEGFRDRAAFIRGAKDIAKEVKKHAAKKVVKGLDRVQDEYSRRSYSRFEEEDDDDD) is interaction with SYT1. Over 1-169 (MEEGFRDRAA…GHGRFQWTLY (169 aa)) the chain is Cytoplasmic. Over residues 33–49 (GLDRVQDEYSRRSYSRF) the composition is skewed to basic and acidic residues. Positions 33–144 (GLDRVQDEYS…GRGEAQRRKE (112 aa)) are disordered. 2 positions are modified to phosphoserine: serine 80 and serine 81. At threonine 84 the chain carries Phosphothreonine. Gly residues predominate over residues 122–137 (VRGGLSDGEGPPGGRG). At serine 127 the chain carries Phosphoserine. A helical transmembrane segment spans residues 170–190 (FVLGLALMADGVEVFVVGFVL). At 191-205 (PSAEKDMCLSDSNKG) the chain is on the extracellular side. The helical transmembrane segment at 206 to 226 (MLGLIVYLGMMVGAFLWGGLA) threads the bilayer. Over 227-233 (DRLGRRQ) the chain is Cytoplasmic. The chain crosses the membrane as a helical span at residues 234 to 254 (CLLISLSVNSVFAFFSSFVQG). The Extracellular portion of the chain corresponds to 255 to 262 (YGTFLFCR). Residues 263-283 (LLSGVGIGGSIPIVFSYFSEF) traverse the membrane as a helical segment. Over 284-294 (LAQEKRGEHLS) the chain is Cytoplasmic. A helical membrane pass occupies residues 295 to 315 (WLCMFWMIGGVYAAAMAWAII). At 316 to 334 (PHYGWSFQMGSAYQFHSWR) the chain is on the extracellular side. A helical transmembrane segment spans residues 335 to 355 (VFVLVCAFPSVFAIGALTTQP). Topologically, residues 356 to 447 (ESPRFFLENG…CFGPEYRRIT (92 aa)) are cytoplasmic. Serine 393 is modified (phosphoserine). Residues 448-468 (LMMMGVWFTMSFSYYGLTVWF) form a helical membrane-spanning segment. Residues 469 to 598 (PDMIRHLQAV…GTGEGAYMVY (130 aa)) lie on the Extracellular side of the membrane. Tyrosine 480 is modified (phosphotyrosine). N-linked (GlcNAc...) asparagine glycans are attached at residues asparagine 498, asparagine 548, and asparagine 573. A helical membrane pass occupies residues 599–619 (FVSFLGTLAVLPGNIVSALLM). The Cytoplasmic portion of the chain corresponds to 620-626 (DKIGRLR). The chain crosses the membrane as a helical span at residues 627–647 (MLAGSSVMSCVSCFFLSFGNS). The Extracellular segment spans residues 648 to 651 (ESAM). Residues 652–672 (IALLCLFGGVSIASWNALDVL) traverse the membrane as a helical segment. Topologically, residues 673–685 (TVELYPSDKRTTA) are cytoplasmic. Residues 686 to 708 (FGFLNALCKLAAVLGISIFTSFV) form a helical membrane-spanning segment. Residues 709–712 (GITK) lie on the Extracellular side of the membrane. The chain crosses the membrane as a helical span at residues 713–731 (AAPILFASAALALGSSLAL). Residues 732-742 (KLPETRGQVLQ) lie on the Cytoplasmic side of the membrane.

This sequence belongs to the major facilitator superfamily. Interacts with SYT1/synaptotagmin-1 in a calcium-dependent manner. Binds the adapter protein complex AP-2. In terms of assembly, (Microbial infection) Interacts with C.botulinum neurotoxin type A2 (BoNT/A, botA). Interaction is improved by glycosylation of SV2. Post-translationally, phosphorylation by CK1 of the N-terminal cytoplasmic domain regulates interaction with SYT1. In terms of processing, N-glycosylated.

Its subcellular location is the presynapse. It is found in the cytoplasmic vesicle. The protein resides in the secretory vesicle. The protein localises to the synaptic vesicle membrane. In terms of biological role, plays a role in the control of regulated secretion in neural and endocrine cells, enhancing selectively low-frequency neurotransmission. Positively regulates vesicle fusion by maintaining the readily releasable pool of secretory vesicles. Functionally, (Microbial infection) Receptor for the C.botulinum neurotoxin type A2 (BoNT/A, botA); glycosylation is not essential but enhances the interaction. Probably also serves as a receptor for the closely related C.botulinum neurotoxin type A1. The sequence is that of Synaptic vesicle glycoprotein 2A (SV2A) from Homo sapiens (Human).